Reading from the N-terminus, the 427-residue chain is Serine/threonine-protein kinase ssn3 (427 aa).

The region spanning 40 to 369 (YHIVGFISSG…AQEALEHPYF (330 aa)) is the Protein kinase domain. ATP-binding positions include 46–54 (ISSGTYGRV) and Lys70. The Proton acceptor role is filled by Asp172. Positions 390 to 399 (RRVTQDDNDI) are enriched in basic and acidic residues. Residues 390 to 427 (RRVTQDDNDIRSGSLPGTKRSGLPDDSLLGRATKRLKE) are disordered.

This sequence belongs to the protein kinase superfamily. CMGC Ser/Thr protein kinase family. CDC2/CDKX subfamily. In terms of assembly, component of the srb8-11 complex, a regulatory module of the Mediator complex. The cofactor is Mg(2+).

The protein resides in the nucleus. It catalyses the reaction L-seryl-[protein] + ATP = O-phospho-L-seryl-[protein] + ADP + H(+). The catalysed reaction is L-threonyl-[protein] + ATP = O-phospho-L-threonyl-[protein] + ADP + H(+). It carries out the reaction [DNA-directed RNA polymerase] + ATP = phospho-[DNA-directed RNA polymerase] + ADP + H(+). Functionally, component of the srb8-11 complex. The srb8-11 complex is a regulatory module of the Mediator complex which is itself involved in regulation of basal and activated RNA polymerase II-dependent transcription. The srb8-11 complex may be involved in the transcriptional repression of a subset of genes regulated by Mediator. It may inhibit the association of the Mediator complex with RNA polymerase II to form the holoenzyme complex. The srb8-11 complex phosphorylates the C-terminal domain (CTD) of the largest subunit of RNA polymerase II. The sequence is that of Serine/threonine-protein kinase ssn3 (ssn3) from Aspergillus niger (strain ATCC MYA-4892 / CBS 513.88 / FGSC A1513).